The following is a 333-amino-acid chain: Fatty acid hydroxylase domain-containing protein 2 (333 aa).

6 consecutive transmembrane segments (helical) span residues 29–49 (FILG…TWHL), 77–97 (ILFF…FNGL), 134–154 (TVLF…YPFL), 168–188 (FHWF…LFYY), 215–235 (VISL…PAIV), and 237–257 (PLVM…ALII). A Fatty acid hydroxylase domain is found at 176–299 (AIFTLIEEVL…LGVLDHLHGT (124 aa)).

This sequence belongs to the sterol desaturase family.

It is found in the cytoplasm. Its subcellular location is the membrane. Promotes megakaryocyte differentiation by enhancing ERK phosphorylation and up-regulating RUNX1 expression. The chain is Fatty acid hydroxylase domain-containing protein 2 (FAXDC2) from Macaca fascicularis (Crab-eating macaque).